A 387-amino-acid chain; its full sequence is 1-deoxy-D-xylulose 5-phosphate reductoisomerase (387 aa).

NADPH is bound by residues Thr-10, Gly-11, Ile-13, Asn-38, and Asn-122. Residue Lys-123 coordinates 1-deoxy-D-xylulose 5-phosphate. NADPH is bound at residue Glu-124. Asp-148 is a binding site for Mn(2+). 1-deoxy-D-xylulose 5-phosphate-binding residues include Ser-149, Glu-150, Ser-174, and His-197. Glu-150 provides a ligand contact to Mn(2+). An NADPH-binding site is contributed by Gly-203. 1-deoxy-D-xylulose 5-phosphate-binding residues include Ser-210, Asn-215, Lys-216, and Glu-219. Glu-219 serves as a coordination point for Mn(2+).

Belongs to the DXR family. Mg(2+) serves as cofactor. It depends on Mn(2+) as a cofactor.

It carries out the reaction 2-C-methyl-D-erythritol 4-phosphate + NADP(+) = 1-deoxy-D-xylulose 5-phosphate + NADPH + H(+). The protein operates within isoprenoid biosynthesis; isopentenyl diphosphate biosynthesis via DXP pathway; isopentenyl diphosphate from 1-deoxy-D-xylulose 5-phosphate: step 1/6. In terms of biological role, catalyzes the NADPH-dependent rearrangement and reduction of 1-deoxy-D-xylulose-5-phosphate (DXP) to 2-C-methyl-D-erythritol 4-phosphate (MEP). This is 1-deoxy-D-xylulose 5-phosphate reductoisomerase from Ehrlichia ruminantium (strain Welgevonden).